The primary structure comprises 245 residues: Probable histone chaperone asf-1-like protein (245 aa).

The span at 157-166 (EDPVAEPVDE) shows a compositional bias: acidic residues. The segment at 157–245 (EDPVAEPVDE…SGDVEMGDKH (89 aa)) is disordered. A compositionally biased stretch (basic and acidic residues) spans 167-183 (EANKVFDEDDLMPLHDD). A compositionally biased stretch (acidic residues) spans 184-206 (GQDDDEEEEDDDETGPNTEEVDL). Over residues 215 to 245 (ANAHDGTEQKNGEESMEHDGASGDVEMGDKH) the composition is skewed to basic and acidic residues.

The protein belongs to the ASF1 family. As to quaternary structure, interacts with histone H3 and histone H4.

It is found in the nucleus. In terms of biological role, histone chaperone that facilitates histone deposition and histone exchange and removal during nucleosome assembly and disassembly. This Caenorhabditis elegans protein is Probable histone chaperone asf-1-like protein (asfl-1).